The chain runs to 250 residues: MEDINFASLAPRHGSRPFMGNWQDIGTSNMSGGAFSWGSLWSGIKNFGSTVKNYGSKAWNSSTGQMLRDKLKEQNFQQKVVDGLASGISGVVDLANQAVQNKINSKLDPRPPVEEPPPAVETVSPEGRGEKRPRPDREETLVTQIDEPPSYEEALKQGLPTTRPIAPMATGVLGQHTPVTLDLPPPADTQQKPVLPGPTAVVVTRPSRASLRRAASGPRSLRPVASGNWQSTLNSIVGLGVQSLKRRRCF.

Positions 1–33 (MEDINFASLAPRHGSRPFMGNWQDIGTSNMSGG) are excised as a propeptide. Positions 34 to 54 (AFSWGSLWSGIKNFGSTVKNY) are amphipathic alpha-helix essential for membrane lytic activity. The interval 36-53 (SWGSLWSGIKNFGSTVKN) is involved in endosomal membrane lysis. The interval 48 to 74 (GSTVKNYGSKAWNSSTGQMLRDKLKEQ) is interaction with hexon protein. A Nuclear export signal motif is present at residues 67 to 76 (LRDKLKEQNF). The interval 103 to 148 (INSKLDPRPPVEEPPPAVETVSPEGRGEKRPRPDREETLVTQIDEP) is disordered. Ser124 is modified (phosphoserine; by host). Residues 127-140 (GRGEKRPRPDREET) are compositionally biased toward basic and acidic residues. The Nuclear localization signal motif lies at 131–135 (KRPRP). A Phosphothreonine; by host modification is found at Thr143. Residues 148–151 (PPSY) carry the PPXY motif motif. The Nuclear export signal motif lies at 231–242 (STLNSIVGLGVQ). The segment at 233–239 (LNSIVGL) is interaction with hexon protein. The tract at residues 240–250 (GVQSLKRRRCF) is binds to importin alpha/beta, involved in hexon nuclear import. A Nuclear localization signal motif is present at residues 245–248 (KRRR).

This sequence belongs to the adenoviridae protein VI family. In terms of assembly, interacts with hexon protein; this interaction allows nuclear import of hexon trimers and possibly pre-capsid assembly. Interacts (via C-terminal NLS) with importin alpha/beta. Interacts (via PPxY motif) with host NEDD4 ubiquitine ligase; this interaction might play a role in virus intracellular transport during entry. Part of a complex composed of the core-capsid bridging protein, the endosome lysis protein VI and the hexon-linking protein VIII; these interactions bridge the virus core to the capsid. Interacts with peripentonal hexons; this interaction stabilizes the capsid by gluing two peripentonal hexons together and joining them with an adjacent group-of-nine hexon. As to quaternary structure, heterodimer with the viral protease; disulfide-linked. Interacts with the viral protease. Post-translationally, ubiquitinated by Nedd4 following partial capsid disassembly; which might play a role in intracellular virus movement during entry. In terms of processing, contains the major nuclear import and export signals. Proteolytically removed during virion maturation. The processing of the C-terminus turns the precursor into a mature viral structural protein and abrogates its ability to promote hexon import and act as a potential chaperone protein.

It localises to the host nucleus. The protein resides in the host cytoplasm. Its subcellular location is the virion. Its function is as follows. During virus assembly, promotes hexon trimers nuclear import through nuclear pore complexes via an importin alpha/beta-dependent mechanism. By analogy to herpesviruses capsid assembly, might act as a chaperone to promote the formation of the icosahedral capsid. Structural component of the virion that provides increased stability to the particle shell through its interaction with the core-capsid bridging protein and the hexon-linking protein VIII. Fibers shedding during virus entry into host cell allows the endosome lysis protein to be exposed as a membrane-lytic peptide. Exhibits pH-independent membrane fragmentation activity and probably mediates viral rapid escape from host endosome via organellar membrane lysis. It is not clear if it then remains partially associated with the capsid and involved in the intracellular microtubule-dependent transport of capsid to the nucleus, or if it is lost during endosomal penetration. In terms of biological role, cofactor that activates the viral protease. Binds to viral protease in a 1:1 ratio. This is Pre-protein VI from Homo sapiens (Human).